Consider the following 263-residue polypeptide: MNPVAGDDVVVIARDVTKRFGDTLALDHVSLDVHRSELLVLLGLSGSGKSTLLRCLNGLHPVTSGTVDVGGTRVDQASGAQLRALRRRVGFVFQHFNLVGRLSCLENVLIGGLGRLRLPRYGALTYPRHMRAEALAHLDRVGLADYADRRADTLSGGQQQRVAIARTLMQKPALLLADEPVASLDPENAGVVMDLLFRVCIEEKLTVVCTLHQVDLALGWAHRLVGLQGGRKVLDRPAVGMTRDDVMAVYQRVEPAVTPARRV.

Positions 11-254 constitute an ABC transporter domain; the sequence is VIARDVTKRF…DVMAVYQRVE (244 aa). 43–50 is a binding site for ATP; the sequence is GLSGSGKS.

It belongs to the ABC transporter superfamily. Phosphonate/phosphate importer (TC 3.A.1.9.2) family. As to quaternary structure, the complex is composed of two ATP-binding proteins (PhnC), two transmembrane proteins (PhnE) and a solute-binding protein (PhnD).

It localises to the cell membrane. It catalyses the reaction phosphate(out) + ATP + H2O = ADP + 2 phosphate(in) + H(+). Functionally, part of the ABC transporter complex PhnCDE involved in phosphate import. Responsible for energy coupling to the transport system. The sequence is that of Phosphate-import ATP-binding protein PhnC (phnC) from Mycolicibacterium smegmatis (strain ATCC 700084 / mc(2)155) (Mycobacterium smegmatis).